Here is a 360-residue protein sequence, read N- to C-terminus: DNA replication and repair protein RecF (360 aa).

Residue 30–37 participates in ATP binding; it reads GHNGSGKT.

It belongs to the RecF family.

The protein resides in the cytoplasm. In terms of biological role, the RecF protein is involved in DNA metabolism; it is required for DNA replication and normal SOS inducibility. RecF binds preferentially to single-stranded, linear DNA. It also seems to bind ATP. The protein is DNA replication and repair protein RecF of Shewanella denitrificans (strain OS217 / ATCC BAA-1090 / DSM 15013).